A 106-amino-acid chain; its full sequence is MNDDILQAVYRVILERKANPSEQSYTASLMAKGIDKILKKLGEEATEVVIAGKGGAREEIIYETADLFFHTLVLLGYCDINPDEIYDELRRRFGMSGIAEKESRDR.

It belongs to the PRA-PH family.

The protein localises to the cytoplasm. It carries out the reaction 1-(5-phospho-beta-D-ribosyl)-ATP + H2O = 1-(5-phospho-beta-D-ribosyl)-5'-AMP + diphosphate + H(+). Its pathway is amino-acid biosynthesis; L-histidine biosynthesis; L-histidine from 5-phospho-alpha-D-ribose 1-diphosphate: step 2/9. This is Phosphoribosyl-ATP pyrophosphatase from Geotalea daltonii (strain DSM 22248 / JCM 15807 / FRC-32) (Geobacter daltonii).